Consider the following 176-residue polypeptide: dCTP deaminase (176 aa).

DCTP is bound by residues 99-104 (RSTLAR) and D115. The Proton donor/acceptor role is filled by E125. Residue Q163 coordinates dCTP.

Belongs to the dCTP deaminase family. As to quaternary structure, homotrimer.

The enzyme catalyses dCTP + H2O + H(+) = dUTP + NH4(+). It functions in the pathway pyrimidine metabolism; dUMP biosynthesis; dUMP from dCTP (dUTP route): step 1/2. In terms of biological role, catalyzes the deamination of dCTP to dUTP. The protein is dCTP deaminase of Pyrobaculum islandicum (strain DSM 4184 / JCM 9189 / GEO3).